Consider the following 197-residue polypeptide: Recombination protein RecR (197 aa).

The segment at 56 to 71 adopts a C4-type zinc-finger fold; that stretch reads CQQCRTLTEQALCNIC. In terms of domain architecture, Toprim spans 79–174; that stretch reads KELCIVETPA…KVSRIAHGIP (96 aa).

Belongs to the RecR family.

Its function is as follows. May play a role in DNA repair. It seems to be involved in an RecBC-independent recombinational process of DNA repair. It may act with RecF and RecO. The sequence is that of Recombination protein RecR from Saccharophagus degradans (strain 2-40 / ATCC 43961 / DSM 17024).